We begin with the raw amino-acid sequence, 200 residues long: Recombination protein RecR (200 aa).

A C4-type zinc finger spans residues 58–73; that stretch reads CQVCGNMDTENICGIC. Residues 81 to 176 enclose the Toprim domain; the sequence is SVIAIVETVA…KISRLASGIP (96 aa).

The protein belongs to the RecR family.

In terms of biological role, may play a role in DNA repair. It seems to be involved in an RecBC-independent recombinational process of DNA repair. It may act with RecF and RecO. This Rickettsia bellii (strain OSU 85-389) protein is Recombination protein RecR.